The following is a 248-amino-acid chain: MADS-box transcription factor 8 (248 aa).

An MADS-box domain is found at 1–61 (MGRGRVELKR…GKLYEFCSGQ (61 aa)). The region spanning 90 to 180 (VQSSRNEYLK…RRKLEESNQL (91 aa)) is the K-box domain.

As to quaternary structure, may interact with the K-box of MADS6 and MADS16. May interact with MADS13 and MADS18. Binds to FCA. Expressed in lodicules, stamens and carpels.

It is found in the nucleus. In terms of biological role, probable transcription factor. May be involved in the control of flowering time. This is MADS-box transcription factor 8 (MADS8) from Oryza sativa subsp. japonica (Rice).